Here is a 213-residue protein sequence, read N- to C-terminus: Cytochrome b6 (213 aa).

Residues 30–50 (IFYCLGGLTLLCFIIQCLTGV) form a helical membrane-spanning segment. Residue C33 coordinates heme c. Positions 84 and 98 each coordinate heme b. 3 consecutive transmembrane segments (helical) span residues 88-108 (CQLMILLVFLHMLRVYYTGAF), 114-134 (LNWVAGCFLLVLSLGLAFTGY), and 184-204 (LHVMILPAITIGFLVAHFIMI). Heme b is bound by residues H185 and H200.

Belongs to the cytochrome b family. PetB subfamily. In terms of assembly, the subunits of the cytochrome bc complex are a Rieske Fe-S protein (PetC), cytochrome b6 (PetB), subunit IV (PetD), and a diheme cytochrome c (PetX). The cofactor is heme b. Heme c is required as a cofactor.

Its subcellular location is the cell membrane. Functionally, component of the cytochrome bc complex which donates electrons to the photosynthetic reaction center. The polypeptide is Cytochrome b6 (Heliobacterium modesticaldum (strain ATCC 51547 / Ice1)).